The sequence spans 459 residues: Cysteine--tRNA ligase (459 aa).

Cys28 serves as a coordination point for Zn(2+). The short motif at 30 to 40 (VTVYDLCHIGH) is the 'HIGH' region element. Positions 209, 234, and 238 each coordinate Zn(2+). The 'KMSKS' region signature appears at 266 to 270 (KMSKS). Residue Lys269 coordinates ATP.

This sequence belongs to the class-I aminoacyl-tRNA synthetase family. Monomer. It depends on Zn(2+) as a cofactor.

The protein resides in the cytoplasm. It carries out the reaction tRNA(Cys) + L-cysteine + ATP = L-cysteinyl-tRNA(Cys) + AMP + diphosphate. In Haemophilus influenzae (strain ATCC 51907 / DSM 11121 / KW20 / Rd), this protein is Cysteine--tRNA ligase (cysS).